Here is a 441-residue protein sequence, read N- to C-terminus: MDSTKLSELKVFIDQCKSDPSLLTTPSLSFFRDYLESLGAKIPTGVHEEDKDTKPRSFVVEESDDDMDETEEVKPKVEEEEEEDEIVESDVELEGDTVEPDNDPPQKMGDSSVEVTDENREAAQEAKGKAMEALSEGNFDEAIEHLTRAITLNPTSAIMYGNRASVYIKLKKPNAAIRDANAALEINPDSAKGYKSRGMARAMLGEWAEAAKDLHLASTIDYDEEISAVLKKVEPNAHKLEEHRRKYDRLRKEREDKKAERDRLRRRAEAQAAYDKAKKEEQSSSSRPSGGGFPGGMPGGFPGGMPGGFPGGMGGMPGGFPGGMGGMGGMPGGFPGGMGGGMPAGMGGGMPGMGGGMPAGMGGGGMPGAGGGMPGGGGMPGGMDFSKILNDPELMTAFSDPEVMAALQDVMKNPANLAKHQANPKVAPVIAKMMGKFAGPQ.

Residues lysine 41–glutamate 114 form a disordered region. A compositionally biased stretch (basic and acidic residues) spans valine 46–proline 55. Composition is skewed to acidic residues over residues glutamate 61–glutamate 71 and glutamate 78–asparagine 102. 2 positions are modified to phosphoserine: serine 63 and serine 89. TPR repeat units follow at residues glutamate 121–serine 156, isoleucine 158–serine 190, and alanine 191–glutamate 224. Residues asparagine 236–serine 285 adopt a coiled-coil conformation. The segment covering arginine 244–glutamine 282 has biased composition (basic and acidic residues). A disordered region spans residues arginine 244–glycine 314. Over residues serine 289–glycine 314 the composition is skewed to gly residues. The STI1 domain occupies aspartate 391 to isoleucine 430.

It belongs to the FAM10 family.

This chain is FAM10 family protein At4g22670, found in Arabidopsis thaliana (Mouse-ear cress).